We begin with the raw amino-acid sequence, 172 residues long: Austinoid biosynthesis clusters protein J (172 aa).

This sequence belongs to the trt14 isomerase family. Homodimer.

It participates in secondary metabolite biosynthesis; terpenoid biosynthesis. Functionally, part of the gene cluster B that mediates the biosynthesis of the fungal meroterpenoid acetoxydehydroaustin. The first step of the pathway is the synthesis of 3,5-dimethylorsellinic acid by the polyketide synthase ausA. 3,5-dimethylorsellinic acid is then prenylated by the polyprenyl transferase ausN. Further epoxidation by the FAD-dependent monooxygenase ausM and cyclization by the probable terpene cyclase ausL lead to the formation of protoaustinoid A. Protoaustinoid A is then oxidized to spiro-lactone preaustinoid A3 by the combined action of the FAD-binding monooxygenases ausB and ausC, and the dioxygenase ausE. Acid-catalyzed keto-rearrangement and ring contraction of the tetraketide portion of preaustinoid A3 by ausJ lead to the formation of preaustinoid A4. The aldo-keto reductase ausK, with the help of ausH, is involved in the next step by transforming preaustinoid A4 into isoaustinone which is in turn hydroxylated by the P450 monooxygenase ausI to form austinolide. The cytochrome P450 monooxygenase ausG then modifies austinolide to austinol. Austinol is further acetylated to austin by the O-acetyltransferase ausP, which spontaneously changes to dehydroaustin. The cytochrome P450 monooxygenase then converts dehydroaustin is into 7-dehydrodehydroaustin. The hydroxylation catalyzed by ausR permits the second O-acetyltransferase ausQ to add an additional acetyl group to the molecule, leading to the formation of acetoxydehydroaustin. Due to genetic rearrangements of the clusters and the subsequent loss of some enzymes, the end product of the Penicillium brasilianum austinoid biosynthesis clusters is acetoxydehydroaustin. This Penicillium brasilianum protein is Austinoid biosynthesis clusters protein J.